We begin with the raw amino-acid sequence, 61 residues long: Small ribosomal subunit protein uS14 (61 aa).

Residues Cys24, Cys27, Cys40, and Cys43 each coordinate Zn(2+).

It belongs to the universal ribosomal protein uS14 family. Zinc-binding uS14 subfamily. Part of the 30S ribosomal subunit. Contacts proteins S3 and S10. It depends on Zn(2+) as a cofactor.

Its function is as follows. Binds 16S rRNA, required for the assembly of 30S particles and may also be responsible for determining the conformation of the 16S rRNA at the A site. The polypeptide is Small ribosomal subunit protein uS14 (Mycobacterium avium (strain 104)).